Here is a 164-residue protein sequence, read N- to C-terminus: ATP synthase subunit b (164 aa).

The chain crosses the membrane as a helical span at residues 6 to 26 (GELIGNFILITGSFILLLVLI).

It belongs to the ATPase B chain family. As to quaternary structure, F-type ATPases have 2 components, F(1) - the catalytic core - and F(0) - the membrane proton channel. F(1) has five subunits: alpha(3), beta(3), gamma(1), delta(1), epsilon(1). F(0) has three main subunits: a(1), b(2) and c(10-14). The alpha and beta chains form an alternating ring which encloses part of the gamma chain. F(1) is attached to F(0) by a central stalk formed by the gamma and epsilon chains, while a peripheral stalk is formed by the delta and b chains.

The protein resides in the cell membrane. In terms of biological role, f(1)F(0) ATP synthase produces ATP from ADP in the presence of a proton or sodium gradient. F-type ATPases consist of two structural domains, F(1) containing the extramembraneous catalytic core and F(0) containing the membrane proton channel, linked together by a central stalk and a peripheral stalk. During catalysis, ATP synthesis in the catalytic domain of F(1) is coupled via a rotary mechanism of the central stalk subunits to proton translocation. Its function is as follows. Component of the F(0) channel, it forms part of the peripheral stalk, linking F(1) to F(0). In Streptococcus pneumoniae serotype 2 (strain D39 / NCTC 7466), this protein is ATP synthase subunit b.